We begin with the raw amino-acid sequence, 468 residues long: MTTALYLPEENIDMIAATSVLQQQAADIRTRTINWASYMQSQMISEEDYKAISALDKSRASFLAQNSSQVVKTLLNLVSHLSKDSTIQYILVLLDDLLQEDRSRVDLFHDTAGKLKQCIWGPFLNLLNRQDGFIVNMSSRILAKFACWGHETMPKSDLNFYLQFLKDQLASNNNEYIQSVARCLQMMLRVDEYRFAFVGVDGISTLIRILSTRVNFQVQYQLIFCLWVLTFNPLLAAKMNKFSVIPILADILSDCAKEKVTRIILAVFRNLIEKPEDSSVAKDHCIAMVQCKVLKQLSILEQRRFDDEDITADVEYLSEKLQNSVQDLSSFDEYATEVRSGRLEWSPVHKSAKFWRENAQRLNEKNYELLRILVHLLETSKDAIILSVACFDIGEYVRHYPRGKHVLEQLGGKQIVMQHLGHEDPNVRYEALLAVQKLMVHNWEYLGKQLEKENENQKQGAAPIAGKA.

This sequence belongs to the V-ATPase H subunit family. As to quaternary structure, V-ATPase is a heteromultimeric enzyme made up of two complexes: the ATP-hydrolytic V1 complex and the proton translocation V0 complex. The V1 complex consists of three catalytic AB heterodimers that form a heterohexamer, three peripheral stalks each consisting of EG heterodimers, one central rotor including subunits D and F, and the regulatory subunits C and H. The proton translocation complex V0 consists of the proton transport subunit a, a ring of proteolipid subunits c9c'', rotary subunit d, subunits e and f, and the accessory subunits VhaAC45 and ATP6AP2.

Its function is as follows. Subunit of the V1 complex of vacuolar(H+)-ATPase (V-ATPase), a multisubunit enzyme composed of a peripheral complex (V1) that hydrolyzes ATP and a membrane integral complex (V0) that translocates protons. V-ATPase is responsible for acidifying and maintaining the pH of intracellular compartments and in some cell types, is targeted to the plasma membrane, where it is responsible for acidifying the extracellular environment. Subunit H is essential for V-ATPase activity, but not for the assembly of the complex. The polypeptide is V-type proton ATPase subunit H (VhaSFD) (Drosophila melanogaster (Fruit fly)).